Consider the following 152-residue polypeptide: TRAPP-associated protein TCA17 (152 aa).

The protein belongs to the TRAPP small subunits family. Sedlin subfamily. In terms of assembly, interacts with the TRAPP II complex; TRAPP II subunits TRS33 and TRS65 are required for this interaction.

It localises to the golgi apparatus. Its subcellular location is the trans-Golgi network. In terms of biological role, required, together with the TRAPP II subunit TRS33, for TRAPP II complex assembly or stability, and for proper Golgi localization of TRAPP and the Rab GTPase YPT31. This chain is TRAPP-associated protein TCA17 (TCA17), found in Saccharomyces cerevisiae (strain ATCC 204508 / S288c) (Baker's yeast).